The primary structure comprises 553 residues: Fusion glycoprotein F0 (553 aa).

Positions 1–31 (MASRSSTRIPAPLMLTIWIALALGCVRLTSS) are cleaved as a signal peptide. At 32–500 (LDGRPLAAAG…VNVRLTNTSA (469 aa)) the chain is on the extracellular side. Cystine bridges form between Cys-76–Cys-199, Cys-338–Cys-347, Cys-362–Cys-370, Cys-394–Cys-399, and Cys-401–Cys-424. Asn-85 carries an N-linked (GlcNAc...) asparagine; by host glycan. Positions 117–141 (FIGAIIGSVALGVATAAQITAASAL) are fusion peptide. Residues 142–170 (IQANQNAANILRLKESIAATNEAVHEVTD) are a coiled coil. N-linked (GlcNAc...) asparagine; by host glycosylation is found at Asn-191 and Asn-192. An N-linked (GlcNAc...) asparagine; by host glycan is attached at Asn-366. N-linked (GlcNAc...) asparagine; by host glycosylation is found at Asn-447 and Asn-471. The stretch at 466–491 (ELGNANNSISNALNKLEESNSKLDKV) forms a coiled coil. The chain crosses the membrane as a helical span at residues 501–521 (LITYIVLTVISLVCGILSLVL). Topologically, residues 522–553 (ACYLMHKQKAQQKTLLWLGNNTLDQMRATTKA) are cytoplasmic. Cys-523 carries S-palmitoyl cysteine; by host lipidation.

This sequence belongs to the paramyxoviruses fusion glycoprotein family. Homotrimer of disulfide-linked F1-F2. Post-translationally, the inactive precursor F0 is glycosylated and proteolytically cleaved into F1 and F2 to be functionally active. The cleavage is mediated by cellular proteases during the transport and maturation of the polypeptide.

It localises to the virion membrane. The protein localises to the host cell membrane. Its function is as follows. Class I viral fusion protein. Under the current model, the protein has at least 3 conformational states: pre-fusion native state, pre-hairpin intermediate state, and post-fusion hairpin state. During viral and plasma cell membrane fusion, the heptad repeat (HR) regions assume a trimer-of-hairpins structure, positioning the fusion peptide in close proximity to the C-terminal region of the ectodomain. The formation of this structure appears to drive apposition and subsequent fusion of viral and plasma cell membranes. Directs fusion of viral and cellular membranes leading to delivery of the nucleocapsid into the cytoplasm. This fusion is pH independent and occurs directly at the outer cell membrane. The trimer of F1-F2 (F protein) probably interacts with HN at the virion surface. Upon HN binding to its cellular receptor, the hydrophobic fusion peptide is unmasked and interacts with the cellular membrane, inducing the fusion between cell and virion membranes. Later in infection, F proteins expressed at the plasma membrane of infected cells could mediate fusion with adjacent cells to form syncytia, a cytopathic effect that could lead to tissue necrosis. The sequence is that of Fusion glycoprotein F0 (F) from Gallus gallus (Chicken).